The chain runs to 148 residues: 3-dehydroquinate dehydratase (148 aa).

Y24 serves as the catalytic Proton acceptor. N75, H81, and D88 together coordinate substrate. Residue H101 is the Proton donor of the active site. Substrate contacts are provided by residues L102–S103 and R112.

Belongs to the type-II 3-dehydroquinase family. In terms of assembly, homododecamer.

The catalysed reaction is 3-dehydroquinate = 3-dehydroshikimate + H2O. Its pathway is metabolic intermediate biosynthesis; chorismate biosynthesis; chorismate from D-erythrose 4-phosphate and phosphoenolpyruvate: step 3/7. Its function is as follows. Catalyzes a trans-dehydration via an enolate intermediate. The protein is 3-dehydroquinate dehydratase of Bartonella henselae (strain ATCC 49882 / DSM 28221 / CCUG 30454 / Houston 1) (Rochalimaea henselae).